The primary structure comprises 571 residues: Potassium-transporting ATPase potassium-binding subunit (571 aa).

11 consecutive transmembrane segments (helical) span residues Gly-5 to Trp-25, Leu-64 to Ile-84, Gly-136 to Ile-156, Ile-178 to Ile-198, Leu-254 to Phe-274, Trp-285 to Ala-305, Phe-330 to Val-350, Phe-357 to Val-379, Met-421 to Leu-441, Leu-488 to Gly-508, and Gly-527 to Phe-547.

This sequence belongs to the KdpA family. In terms of assembly, the system is composed of three essential subunits: KdpA, KdpB and KdpC.

It is found in the cell inner membrane. Part of the high-affinity ATP-driven potassium transport (or Kdp) system, which catalyzes the hydrolysis of ATP coupled with the electrogenic transport of potassium into the cytoplasm. This subunit binds the periplasmic potassium ions and delivers the ions to the membrane domain of KdpB through an intramembrane tunnel. The polypeptide is Potassium-transporting ATPase potassium-binding subunit (Methylobacterium nodulans (strain LMG 21967 / CNCM I-2342 / ORS 2060)).